The following is a 658-amino-acid chain: UvrABC system protein B (658 aa).

Residues 26–414 (AGLKKGLKHQ…PDVIEQIIRP (389 aa)) enclose the Helicase ATP-binding domain. Position 39-46 (39-46 (GATGTGKT)) interacts with ATP. A Beta-hairpin motif is present at residues 92–115 (YYDYYQPEAYVPQSDTYIEKDASI). Residues 430 to 592 (QIDDLMDEIN…ITPKTIKKEI (163 aa)) enclose the Helicase C-terminal domain. The UVR domain occupies 622-658 (DVFIEGMEHEMKEAAKALDFERAAELRDALLEIKAEG).

It belongs to the UvrB family. As to quaternary structure, forms a heterotetramer with UvrA during the search for lesions. Interacts with UvrC in an incision complex.

Its subcellular location is the cytoplasm. In terms of biological role, the UvrABC repair system catalyzes the recognition and processing of DNA lesions. A damage recognition complex composed of 2 UvrA and 2 UvrB subunits scans DNA for abnormalities. Upon binding of the UvrA(2)B(2) complex to a putative damaged site, the DNA wraps around one UvrB monomer. DNA wrap is dependent on ATP binding by UvrB and probably causes local melting of the DNA helix, facilitating insertion of UvrB beta-hairpin between the DNA strands. Then UvrB probes one DNA strand for the presence of a lesion. If a lesion is found the UvrA subunits dissociate and the UvrB-DNA preincision complex is formed. This complex is subsequently bound by UvrC and the second UvrB is released. If no lesion is found, the DNA wraps around the other UvrB subunit that will check the other stand for damage. The polypeptide is UvrABC system protein B (Listeria monocytogenes serovar 1/2a (strain ATCC BAA-679 / EGD-e)).